The sequence spans 320 residues: NAC domain-containing protein 20 (320 aa).

Positions 14-170 (LPPGFRFHPT…DWAVCRIFHK (157 aa)) constitute an NAC domain. The DNA-binding element occupies 114-176 (IGMKKTLVFY…IFHKSSGIKK (63 aa)).

Forms homodimers. Forms heterodimers with NAC26. As to expression, expressed in developing seeds. Expressed in developing endosperm.

Its subcellular location is the nucleus. It is found in the endoplasmic reticulum. Its function is as follows. Transcription factor that acts redundantly with NAC26 to regulate the expression of genes involved in the biosynthesis of starch and storage proteins in grain. Directly binds to the promoters of starch synthase 1 (SS1), pullulanase (PUL), glutelin A1 (GLUA1), glutelins B4 and B5 (GLUB4 and GLUB5), alpha-globulin and 16 kDa prolamin, and activates their expression. The chain is NAC domain-containing protein 20 from Oryza sativa subsp. japonica (Rice).